A 307-amino-acid polypeptide reads, in one-letter code: MENKDGFLVINKDKGCTSHDCVKQIRKLLNTRKVGHTGTLDPEVIGTLPIAIGSATRFIQYLPQGKTYIGQIKLGIRTNTDDIHGEIINQKCWPKISDEKLDQYLNKFRGLIKQIPPKVSSVHVNGERAYKKSFNNENFELAPREVKIDELILMKWDQINGIIELKINCSAGTYIRAIARDLGEILNSEGCLLQLKRISACGFHEKNSIKISDIKKGIDQKNASNFIIPTISALNHISTLILNKEEDINFWQTGRAIKFDINYFNEGNNFDNKKPIKVVDKRKMLLGIGFLNKELTNINPKLVLNAK.

The Nucleophile role is filled by Asp41.

It belongs to the pseudouridine synthase TruB family. Type 1 subfamily.

The enzyme catalyses uridine(55) in tRNA = pseudouridine(55) in tRNA. Its function is as follows. Responsible for synthesis of pseudouridine from uracil-55 in the psi GC loop of transfer RNAs. This is tRNA pseudouridine synthase B from Prochlorococcus marinus (strain MIT 9312).